The chain runs to 484 residues: Sperm-associated antigen 8 (484 aa).

The span at 1–11 (METSESTDRSQ) shows a compositional bias: basic and acidic residues. Disordered regions lie at residues 1-32 (METS…DPFS), 123-221 (DLSS…SAPV), and 324-348 (LQPQ…SHCQ). Low complexity-rich tracts occupy residues 20–32 (SSDG…DPFS) and 125–160 (SSSR…SSSS). A compositionally biased stretch (gly residues) spans 161–195 (GPGGSPGGSGRGPGHGPGPGGGSGQGPGGGSGQGT). Positions 324 to 339 (LQPQSPTSSCTTQKDS) are enriched in polar residues. 2 mn regions span residues 332 to 345 (SCTT…PPKS) and 384 to 398 (ESVT…LVQA). The interval 455–484 (PLPFEPESYSQHGEISSLACQGGGQGGGGG) is disordered. The span at 475-484 (QGGGQGGGGG) shows a compositional bias: gly residues.

This sequence belongs to the SPAG8 family. In terms of assembly, microtubule inner protein component of sperm flagellar doublet microtubules. Interacts with FHL5 (via second LIM domain). Interacts with RANBP9. Expressed in trachea multiciliated cells.

It localises to the cytoplasm. The protein localises to the nucleus. Its subcellular location is the cytoplasmic vesicle. The protein resides in the secretory vesicle. It is found in the acrosome. It localises to the cytoskeleton. The protein localises to the microtubule organizing center. Its subcellular location is the spindle. The protein resides in the cilium axoneme. It is found in the flagellum axoneme. In terms of biological role, microtubule inner protein (MIP) part of the dynein-decorated doublet microtubules (DMTs) in cilia axoneme, which is required for motile cilia beating. Plays a role in spermatogenesis by enhancing the binding of CREM isoform tau to its coactivator FHL5 and increasing the FHL5-regulated transcriptional activation of CREM isoform tau. Involved in the acrosome reaction and in binding of sperm to the zona pellucida. Plays a role in regulation of the cell cycle by controlling progression through the G2/M phase, possibly by delaying the activation of CDK1 which is required for entry into mitosis. May play a role in fertility and microtubule formation through interaction with RANBP9. The chain is Sperm-associated antigen 8 (SPAG8) from Bos taurus (Bovine).